The chain runs to 275 residues: Putative phosphoenolpyruvate synthase regulatory protein (275 aa).

153–160 contributes to the ADP binding site; sequence GVSRTGKT.

Belongs to the pyruvate, phosphate/water dikinase regulatory protein family. PSRP subfamily.

The enzyme catalyses [pyruvate, water dikinase] + ADP = [pyruvate, water dikinase]-phosphate + AMP + H(+). It catalyses the reaction [pyruvate, water dikinase]-phosphate + phosphate + H(+) = [pyruvate, water dikinase] + diphosphate. Functionally, bifunctional serine/threonine kinase and phosphorylase involved in the regulation of the phosphoenolpyruvate synthase (PEPS) by catalyzing its phosphorylation/dephosphorylation. In Nitrosomonas europaea (strain ATCC 19718 / CIP 103999 / KCTC 2705 / NBRC 14298), this protein is Putative phosphoenolpyruvate synthase regulatory protein.